The following is a 353-amino-acid chain: B1 bradykinin receptor (353 aa).

Residues Met1–Leu40 are Extracellular-facing. 2 N-linked (GlcNAc...) asparagine glycosylation sites follow: Asn14 and Asn22. Residues Pro41–Leu64 form a helical membrane-spanning segment. Residues Pro65 to Glu73 are Cytoplasmic-facing. The chain crosses the membrane as a helical span at residues Ile74–Trp98. The Extracellular portion of the chain corresponds to Asn99–Arg111. An intrachain disulfide couples Cys110 to Cys189. A helical membrane pass occupies residues Val112–Gln133. The Cytoplasmic segment spans residues Asp134–Arg155. A helical membrane pass occupies residues Val156–Ile178. Residues Gln179–His199 lie on the Extracellular side of the membrane. A glycan (N-linked (GlcNAc...) asparagine) is linked at Asn185. The chain crosses the membrane as a helical span at residues Phe200–Leu226. At Ala227–Lys247 the chain is on the cytoplasmic side. The chain crosses the membrane as a helical span at residues Thr248 to Leu272. Residues Glu273–Asp291 lie on the Extracellular side of the membrane. Residues Leu292–Phe314 traverse the membrane as a helical segment. Residues Val315–Asn353 are Cytoplasmic-facing. Cys330 carries S-palmitoyl cysteine lipidation.

This sequence belongs to the G-protein coupled receptor 1 family. Bradykinin receptor subfamily. BDKRB1 sub-subfamily.

The protein resides in the cell membrane. In terms of biological role, this is a receptor for bradykinin. Could be a factor in chronic pain and inflammation. The protein is B1 bradykinin receptor (BDKRB1) of Homo sapiens (Human).